Here is an 85-residue protein sequence, read N- to C-terminus: ELKEMLLKKYSGCLSRLRSEFLKKRKKGKLPKDARSALMDWWNTHYRWPYPTEEDKVRLAAMTGLDPKQINNWFINQRKRHWKPS.

Residues E1–F21 form the ELK domain. Residues L22–S85 constitute a DNA-binding region (homeobox; TALE-type).

Belongs to the TALE/KNOX homeobox family. In terms of tissue distribution, strongly expressed in ear inflorescence primordia and shoot meristem. Weakly expressed in embryos. Absent from leaves.

It is found in the nucleus. Its function is as follows. Probably binds to the DNA sequence 5'-TGAC-3'. This Zea mays (Maize) protein is Homeobox protein knotted-1-like 5 (KNOX5).